A 521-amino-acid polypeptide reads, in one-letter code: MAKIIEEMINKKGLLIDDYELYGNEIAKIKSIKKLNKKDSKLIVITSMNPNPAGEGKTTTAIGLVDALNKHGYKAIGALREPSMGPVFGMKGTGSGGGLSFLKPFDKINLHFSGDFHAITAANNLIVAVIENEIHNRSSMQIDSQKILIKRCLDVNDRSLRNIEYDINHQQTKSGFNITAASDLMALFCLAHDHKDFEDKLAQTIVAYNIVNQPIRICDLELTKAIMAILEDALYANLVRTNEDNPVFVHGGPFANIAHGCNSIIATKNALALGDYVVTECGFGSDLGLEKFMNIKMASLNLKPDLIGLVISLKSIAYHAQTNEKDYVKQGFANVLCHINHIKKYNVSFIVYINVNTNTDSEEDLLTLEKLLDEHQIEHARSYAYSYGSKKSEEITKKTITLTNQINDHELKLIYDIKDHLSYKLKKICENVYGADGYELSYEAKEQLNRYEHLDFYLCIAKTPYSISDDAKLLNNPKNFKIHIERFEINYAAKLIIAITTTIYRMPGLNKEPAAKNFVMK.

This sequence belongs to the formate--tetrahydrofolate ligase family.

The enzyme catalyses (6S)-5,6,7,8-tetrahydrofolate + formate + ATP = (6R)-10-formyltetrahydrofolate + ADP + phosphate. It functions in the pathway one-carbon metabolism; tetrahydrofolate interconversion. This is Formate--tetrahydrofolate ligase from Ureaplasma parvum serovar 3 (strain ATCC 700970).